We begin with the raw amino-acid sequence, 256 residues long: 1-(5-phosphoribosyl)-5-[(5-phosphoribosylamino)methylideneamino] imidazole-4-carboxamide isomerase (256 aa).

Residue D8 is the Proton acceptor of the active site. Catalysis depends on D130, which acts as the Proton donor.

Belongs to the HisA/HisF family.

The protein resides in the cytoplasm. It catalyses the reaction 1-(5-phospho-beta-D-ribosyl)-5-[(5-phospho-beta-D-ribosylamino)methylideneamino]imidazole-4-carboxamide = 5-[(5-phospho-1-deoxy-D-ribulos-1-ylimino)methylamino]-1-(5-phospho-beta-D-ribosyl)imidazole-4-carboxamide. It participates in amino-acid biosynthesis; L-histidine biosynthesis; L-histidine from 5-phospho-alpha-D-ribose 1-diphosphate: step 4/9. This Chlorobium phaeobacteroides (strain DSM 266 / SMG 266 / 2430) protein is 1-(5-phosphoribosyl)-5-[(5-phosphoribosylamino)methylideneamino] imidazole-4-carboxamide isomerase.